A 295-amino-acid polypeptide reads, in one-letter code: Proline iminopeptidase (295 aa).

One can recognise an AB hydrolase-1 domain in the interval 29 to 279 (PLLLLHGGPG…GCGHMPFVQE (251 aa)). Catalysis depends on serine 107, which acts as the Nucleophile. Aspartate 246 is a catalytic residue. Residue histidine 273 is the Proton donor of the active site.

Belongs to the peptidase S33 family.

The protein resides in the cell envelope. The catalysed reaction is Release of N-terminal proline from a peptide.. In terms of biological role, releases the N-terminal proline from various substrates. The protein is Proline iminopeptidase of Lactobacillus delbrueckii subsp. bulgaricus (strain ATCC 11842 / DSM 20081 / BCRC 10696 / JCM 1002 / NBRC 13953 / NCIMB 11778 / NCTC 12712 / WDCM 00102 / Lb 14).